The primary structure comprises 392 residues: Speckle-type POZ protein-like (392 aa).

Residues 31–161 (KFSYMWTINN…DDKLTLYCEV (131 aa)) form the MATH domain. A BTB domain is found at 200 to 267 (TDCSLFVEGK…IYTGGTPHVD (68 aa)).

It belongs to the Tdpoz family. In terms of assembly, homodimer. Heterodimer with SPOP. Component of cullin-RING-based BCR (BTB-CUL3-RBX1) E3 ubiquitin-protein ligase complexes containing homodimeric SPOPL or the heterodimer formed by SPOP and SPOPL.

The protein resides in the nucleus. Its pathway is protein modification; protein ubiquitination. Functionally, component of a cullin-RING-based BCR (BTB-CUL3-RBX1) E3 ubiquitin-protein ligase complex that mediates the ubiquitination and subsequent proteasomal degradation of target proteins, but with relatively low efficiency. This Xenopus laevis (African clawed frog) protein is Speckle-type POZ protein-like (spopl).